The chain runs to 327 residues: Selenate reductase subunit beta (327 aa).

4Fe-4S ferredoxin-type domains are found at residues 6-35 (LAYV…RDGR), 124-155 (NHYF…KREE), and 157-186 (GLVV…FNLQ). [4Fe-4S] cluster is bound by residues cysteine 15, cysteine 18, cysteine 21, cysteine 25, cysteine 133, cysteine 136, and cysteine 141. Residues cysteine 145, cysteine 166, and cysteine 172 each coordinate [3Fe-4S] cluster. 5 residues coordinate [4Fe-4S] cluster: cysteine 176, cysteine 193, cysteine 196, cysteine 208, and cysteine 212.

In terms of assembly, heterotrimer of alpha (SerA), beta (SerB) and gamma (SerC) subunits. Requires [3Fe-4S] cluster as cofactor. It depends on [4Fe-4S] cluster as a cofactor.

The protein localises to the periplasm. It catalyses the reaction selenite + 2 Fe(III)-[cytochrome c] + H2O = 2 Fe(II)-[cytochrome] + selenate + 2 H(+). Enzyme isolated from cells grown in a tungstate rich environment shows a 20-fold reduction in selenate reductase activity. Its function is as follows. Component of the selenate reductase, which catalyzes the reduction of selenate to selenite and allows anaerobic growth with selenate as the sole terminal electron acceptor. A c-type di-heme cytochrome of the cytc4 family was shown to donate electrons to the selenate reductase in vitro. SerABC can also use reduced benzyl viologen or reduced methyl viologen as an electron donor. This subunit transfers electrons from SerC to SerA. The reductase is specific for selenate, and cannot reduce nitrate, nitrite, chlorate or sulfate. The protein is Selenate reductase subunit beta of Thauera selenatis.